Here is a 356-residue protein sequence, read N- to C-terminus: Tyrosine recombinase XerS (356 aa).

In terms of domain architecture, Core-binding (CB) spans 16–121 (LMPWYVLEYY…ALSSLYKYLT (106 aa)). Residues 169–354 (GFLTYIDQEH…VNDEQKNALD (186 aa)) form the Tyr recombinase domain. Residues R210, K234, H306, R309, and H332 contribute to the active site. Y341 (O-(3'-phospho-DNA)-tyrosine intermediate) is an active-site residue.

Belongs to the 'phage' integrase family. XerS subfamily.

The protein resides in the cytoplasm. FtsK is required for recombination. Its function is as follows. Site-specific tyrosine recombinase, which acts by catalyzing the cutting and rejoining of the recombining DNA molecules. Essential to convert dimers of the bacterial chromosome into monomers to permit their segregation at cell division. The sequence is that of Tyrosine recombinase XerS from Streptococcus pneumoniae serotype 19F (strain G54).